A 308-amino-acid chain; its full sequence is MEAGVGLALQSRAAGFGGSDRRRSALYGGEGRARIGSLRVAEPAVAKAAVWARGSKPVAPLRAKKSSGGHETLHNSVDEALLLKRKSEEVLFYLNGRCIYLVGMMGSGKSTVGKIMSEVLGYSFFDSDKLVEQAVGMPSVAQIFKVHSEAFFRDNESSVLRDLSSMKRLVVATGGGAVIRPVNWKYMKKGLSVWLDVPLDALARRIAKVGTASRPLLDQPSGDPYTMAFSKLSMLAEQRGDAYANADVRVSLEEIASKQGHDDVSKLTPTDIAIESFHKIENFVIEHTVDNPVGDSQADSRAQRIQTL.

The transit peptide at 1 to 62 (MEAGVGLALQ…RGSKPVAPLR (62 aa)) directs the protein to the chloroplast. 103–110 (GMMGSGKS) contacts ATP. A Mg(2+)-binding site is contributed by serine 110. Substrate-binding residues include aspartate 128, arginine 153, and glycine 175. Position 214 (arginine 214) interacts with ATP.

It belongs to the shikimate kinase family. Requires Mg(2+) as cofactor. In terms of tissue distribution, expressed in panicles.

The protein localises to the plastid. Its subcellular location is the chloroplast. The catalysed reaction is shikimate + ATP = 3-phosphoshikimate + ADP + H(+). Its pathway is metabolic intermediate biosynthesis; chorismate biosynthesis; chorismate from D-erythrose 4-phosphate and phosphoenolpyruvate: step 5/7. Its function is as follows. Catalyzes the specific phosphorylation of the 3-hydroxyl group of shikimic acid using ATP as a cosubstrate. In Oryza sativa subsp. japonica (Rice), this protein is Shikimate kinase 1, chloroplastic (SK1).